Here is a 424-residue protein sequence, read N- to C-terminus: Dihydroorotase (424 aa).

2 residues coordinate Zn(2+): His-58 and His-60. Substrate contacts are provided by residues 60–62 (HLR), Asn-92, and Asn-276. Asp-303 is a Zn(2+) binding site. Residue Asp-303 is part of the active site. Residues His-307 and 321 to 322 (FG) contribute to the substrate site.

Belongs to the metallo-dependent hydrolases superfamily. DHOase family. Class I DHOase subfamily. Zn(2+) serves as cofactor.

It catalyses the reaction (S)-dihydroorotate + H2O = N-carbamoyl-L-aspartate + H(+). It participates in pyrimidine metabolism; UMP biosynthesis via de novo pathway; (S)-dihydroorotate from bicarbonate: step 3/3. Its function is as follows. Catalyzes the reversible cyclization of carbamoyl aspartate to dihydroorotate. The polypeptide is Dihydroorotase (Staphylococcus aureus (strain COL)).